A 952-amino-acid chain; its full sequence is Protein translocase subunit SecA (952 aa).

Residues Gln-135, 153-157 (GEGKT), and Asp-575 contribute to the ATP site. Over residues 907 to 921 (AAPAAAIPGVSAKAA) the composition is skewed to low complexity. A disordered region spans residues 907-946 (AAPAAAIPGVSAKAATQSTTPAAKEIGRNDPCPCGSGKKY). The Zn(2+) site is built by Cys-938, Cys-940, Cys-949, and Cys-950.

It belongs to the SecA family. In terms of assembly, monomer and homodimer. Part of the essential Sec protein translocation apparatus which comprises SecA, SecYEG and auxiliary proteins SecDF. Other proteins may also be involved. The cofactor is Zn(2+).

The protein resides in the cell membrane. Its subcellular location is the cytoplasm. It carries out the reaction ATP + H2O + cellular proteinSide 1 = ADP + phosphate + cellular proteinSide 2.. Part of the Sec protein translocase complex. Interacts with the SecYEG preprotein conducting channel. Has a central role in coupling the hydrolysis of ATP to the transfer of proteins into and across the cell membrane, serving as an ATP-driven molecular motor driving the stepwise translocation of polypeptide chains across the membrane. The chain is Protein translocase subunit SecA from Dehalococcoides mccartyi (strain CBDB1).